The following is a 151-amino-acid chain: Large ribosomal subunit protein uL13 (151 aa).

It belongs to the universal ribosomal protein uL13 family. Part of the 50S ribosomal subunit.

Functionally, this protein is one of the early assembly proteins of the 50S ribosomal subunit, although it is not seen to bind rRNA by itself. It is important during the early stages of 50S assembly. The polypeptide is Large ribosomal subunit protein uL13 (Microchaete diplosiphon (Fremyella diplosiphon)).